The chain runs to 150 residues: Large ribosomal subunit protein uL13 (150 aa).

It belongs to the universal ribosomal protein uL13 family. In terms of assembly, part of the 50S ribosomal subunit.

In terms of biological role, this protein is one of the early assembly proteins of the 50S ribosomal subunit, although it is not seen to bind rRNA by itself. It is important during the early stages of 50S assembly. This Chlamydia caviae (strain ATCC VR-813 / DSM 19441 / 03DC25 / GPIC) (Chlamydophila caviae) protein is Large ribosomal subunit protein uL13.